We begin with the raw amino-acid sequence, 297 residues long: Large ribosomal subunit protein uL3 (297 aa).

Disordered stretches follow at residues Asn124–Gln143 and Met258–Glu297.

Belongs to the universal ribosomal protein uL3 family. As to quaternary structure, part of the 50S ribosomal subunit. Forms a cluster with proteins L14 and L19.

One of the primary rRNA binding proteins, it binds directly near the 3'-end of the 23S rRNA, where it nucleates assembly of the 50S subunit. The chain is Large ribosomal subunit protein uL3 from Mycoplasma mobile (strain ATCC 43663 / 163K / NCTC 11711) (Mesomycoplasma mobile).